A 315-amino-acid polypeptide reads, in one-letter code: ATP synthase gamma chain (315 aa).

This sequence belongs to the ATPase gamma chain family. In terms of assembly, F-type ATPases have 2 components, CF(1) - the catalytic core - and CF(0) - the membrane proton channel. CF(1) has five subunits: alpha(3), beta(3), gamma(1), delta(1), epsilon(1). CF(0) has three main subunits: a, b and c.

It localises to the cellular thylakoid membrane. Its function is as follows. Produces ATP from ADP in the presence of a proton gradient across the membrane. The gamma chain is believed to be important in regulating ATPase activity and the flow of protons through the CF(0) complex. This Microcystis aeruginosa (strain NIES-843 / IAM M-2473) protein is ATP synthase gamma chain.